We begin with the raw amino-acid sequence, 487 residues long: ATP synthase subunit beta (487 aa).

164–171 (GGAGVGKT) contacts ATP.

The protein belongs to the ATPase alpha/beta chains family. F-type ATPases have 2 components, CF(1) - the catalytic core - and CF(0) - the membrane proton channel. CF(1) has five subunits: alpha(3), beta(3), gamma(1), delta(1), epsilon(1). CF(0) has four main subunits: a(1), b(1), b'(1) and c(9-12).

It localises to the cellular thylakoid membrane. It catalyses the reaction ATP + H2O + 4 H(+)(in) = ADP + phosphate + 5 H(+)(out). In terms of biological role, produces ATP from ADP in the presence of a proton gradient across the membrane. The catalytic sites are hosted primarily by the beta subunits. In Synechococcus sp. (strain WH7803), this protein is ATP synthase subunit beta.